Reading from the N-terminus, the 327-residue chain is Mitochondrial substrate carrier family protein A (327 aa).

The disordered stretch occupies residues 1–36 (MVINNQNNNNQNNNQNNNNKNDNLNNSTTTTTTTAT). The Mitochondrial intermembrane segment spans residues 1–48 (MVINNQNNNNQNNNQNNNNKNDNLNNSTTTTTTTATTTKSSTLFHSND). Solcar repeat units lie at residues 43-132 (LFHS…FKRM), 140-224 (ISVI…IKEK), and 233-323 (PPLY…AITL). A helical membrane pass occupies residues 49 to 66 (FFSGLIAGIVSRTLTAPL). At 67–106 (ERIKILNQVEVILKDGTKYNRIIPAFKVIIKEEGIAGLFR) the chain is on the mitochondrial matrix side. A helical membrane pass occupies residues 107–127 (GNFVNIIKAGPQSAIRFYSYG). The Mitochondrial intermembrane segment spans residues 128–145 (AFKRMASEPDGSISVINR). A helical membrane pass occupies residues 146–166 (MWAGASSGVVSVALTHPLDVI). At 167–192 (KTHITVIAPTAATIKNVTKGIYRDLG) the chain is on the mitochondrial matrix side. A helical membrane pass occupies residues 193–213 (IIGFFRGLSAGILNIAPFAAL). Residues 214 to 238 (NFTFYETIKEKTQQYILKSPPLYAP) lie on the Mitochondrial intermembrane side of the membrane. A helical membrane pass occupies residues 239–259 (SIYGAISGGLTMTILYPLDVV). Residues 260–303 (KRRIMLQHFDRNQLPIYKNFIDAIIKITKTEGISALYKGIRPAY) are Mitochondrial matrix-facing. Residues 304–324 (LKVIPTVSINFLIYEGAITLF) form a helical membrane-spanning segment. The Mitochondrial intermembrane segment spans residues 325–327 (EKK).

The protein belongs to the mitochondrial carrier (TC 2.A.29) family.

Its subcellular location is the mitochondrion inner membrane. Functionally, calcium-dependent mitochondrial solute carrier. Mitochondrial solute carriers shuttle metabolites, nucleotides, and cofactors through the mitochondrial inner membrane. This is Mitochondrial substrate carrier family protein A (mcfA) from Dictyostelium discoideum (Social amoeba).